We begin with the raw amino-acid sequence, 425 residues long: MLIQVQPSHLTDTNLSLHSAKPSSDHQNLLPSEFMTERPLNTTEQDLTALNHTEKPDCGKELLLYGDTEKIVIGVVLSIITLFTIAGNALVIISVCIVKKLRQPSNYLVVSLAAADLSVAVAVMPFVIITDLVGGEWLFGKVFCNVFIAMDVMCCTASIMTLCVISVDRYLGITRPLTYPARQNGKLMAKMVFIVWLLSASITLPPLFGWAKNVNVERVCLISQDFGYTVYSTAVAFYIPMTVMLVMYQRIFVAAKISAEKHKFVNIPRLYEQEGIYCLEDKLPPKKNSKKKKAVEEFASLSKLIRQDRKNISIFKREQKAARTLGIIVGAFTFCWLPFFLLSTARPFICGIMCSCMPLRLERTLLWLGYTNSLINPLIYAFFNRDLRTTFWNLLRCKYTNINRRLSAASMHEALKVTERHEGIL.

Residues 1–72 (MLIQVQPSHL…LLYGDTEKIV (72 aa)) are Extracellular-facing. 3 N-linked (GlcNAc...) asparagine glycosylation sites follow: Asn14, Asn41, and Asn51. The helical transmembrane segment at 73-97 (IGVVLSIITLFTIAGNALVIISVCI) threads the bilayer. The Cytoplasmic segment spans residues 98-107 (VKKLRQPSNY). The chain crosses the membrane as a helical span at residues 108 to 129 (LVVSLAAADLSVAVAVMPFVII). Residues 130 to 141 (TDLVGGEWLFGK) lie on the Extracellular side of the membrane. Residues 142–167 (VFCNVFIAMDVMCCTASIMTLCVISV) traverse the membrane as a helical segment. Cys144 and Cys220 are oxidised to a cystine. Asp151 contacts serotonin. Over 168 to 187 (DRYLGITRPLTYPARQNGKL) the chain is Cytoplasmic. The helical transmembrane segment at 188-208 (MAKMVFIVWLLSASITLPPLF) threads the bilayer. At 209 to 226 (GWAKNVNVERVCLISQDF) the chain is on the extracellular side. A helical transmembrane segment spans residues 227-249 (GYTVYSTAVAFYIPMTVMLVMYQ). Topologically, residues 250 to 322 (RIFVAAKISA…SIFKREQKAA (73 aa)) are cytoplasmic. Residues 323–348 (RTLGIIVGAFTFCWLPFFLLSTARPF) form a helical membrane-spanning segment. Residues 349-359 (ICGIMCSCMPL) lie on the Extracellular side of the membrane. The helical transmembrane segment at 360–383 (RLERTLLWLGYTNSLINPLIYAFF) threads the bilayer. Residues 384-425 (NRDLRTTFWNLLRCKYTNINRRLSAASMHEALKVTERHEGIL) lie on the Cytoplasmic side of the membrane. Cys397 carries the S-palmitoyl cysteine lipid modification.

The protein belongs to the G-protein coupled receptor 1 family.

It is found in the cell membrane. In terms of biological role, G-protein coupled receptor for 5-hydroxytryptamine (serotonin), a biogenic hormone that functions as a neurotransmitter, a hormone and a mitogen. Ligand binding causes a conformation change that triggers signaling via guanine nucleotide-binding proteins (G proteins) and modulates the activity of downstream effectors. HTR7 is coupled to G(s) G alpha proteins and mediates activation of adenylate cyclase activity. This chain is 5-hydroxytryptamine receptor 7 (htr7), found in Xenopus laevis (African clawed frog).